A 305-amino-acid chain; its full sequence is Oxygen-dependent coproporphyrinogen-III oxidase (305 aa).

S97 contacts substrate. A divalent metal cation-binding residues include H101 and H111. Catalysis depends on H111, which acts as the Proton donor. Residue 113-115 coordinates substrate; that stretch reads NVR. A divalent metal cation contacts are provided by H150 and H180. Residues 245-280 form an important for dimerization region; it reads YVEFNLVWDRGTHFGLQSGGRTESILLSMPPLASWA. 263 to 265 is a binding site for substrate; sequence GGR.

Belongs to the aerobic coproporphyrinogen-III oxidase family. As to quaternary structure, homodimer. It depends on a divalent metal cation as a cofactor.

It localises to the cytoplasm. The enzyme catalyses coproporphyrinogen III + O2 + 2 H(+) = protoporphyrinogen IX + 2 CO2 + 2 H2O. It functions in the pathway porphyrin-containing compound metabolism; protoporphyrin-IX biosynthesis; protoporphyrinogen-IX from coproporphyrinogen-III (O2 route): step 1/1. Its function is as follows. Involved in the heme biosynthesis. Catalyzes the aerobic oxidative decarboxylation of propionate groups of rings A and B of coproporphyrinogen-III to yield the vinyl groups in protoporphyrinogen-IX. This chain is Oxygen-dependent coproporphyrinogen-III oxidase, found in Variovorax paradoxus (strain S110).